The following is a 196-amino-acid chain: Peptide methionine sulfoxide reductase MsrA 2 (196 aa).

Cysteine 36 is an active-site residue.

The protein belongs to the MsrA Met sulfoxide reductase family.

It catalyses the reaction L-methionyl-[protein] + [thioredoxin]-disulfide + H2O = L-methionyl-(S)-S-oxide-[protein] + [thioredoxin]-dithiol. The catalysed reaction is [thioredoxin]-disulfide + L-methionine + H2O = L-methionine (S)-S-oxide + [thioredoxin]-dithiol. Functionally, has an important function as a repair enzyme for proteins that have been inactivated by oxidation. Catalyzes the reversible oxidation-reduction of methionine sulfoxide in proteins to methionine. This chain is Peptide methionine sulfoxide reductase MsrA 2 (msrA2), found in Caulobacter vibrioides (strain ATCC 19089 / CIP 103742 / CB 15) (Caulobacter crescentus).